We begin with the raw amino-acid sequence, 239 residues long: Purine nucleoside phosphorylase DeoD-type (239 aa).

A purine D-ribonucleoside is bound at residue His5. Gly21 and Arg25 together coordinate phosphate. N6-acetyllysine is present on Lys27. Phosphate-binding positions include Arg44 and 88–91; that span reads RVGS. A purine D-ribonucleoside-binding positions include 180-182 and 204-205; these read EME and SD. The Proton donor role is filled by Asp205.

This sequence belongs to the PNP/UDP phosphorylase family. Homohexamer; trimer of homodimers.

It catalyses the reaction a purine D-ribonucleoside + phosphate = a purine nucleobase + alpha-D-ribose 1-phosphate. The catalysed reaction is a purine 2'-deoxy-D-ribonucleoside + phosphate = a purine nucleobase + 2-deoxy-alpha-D-ribose 1-phosphate. In terms of biological role, catalyzes the reversible phosphorolytic breakdown of the N-glycosidic bond in the beta-(deoxy)ribonucleoside molecules, with the formation of the corresponding free purine bases and pentose-1-phosphate. The polypeptide is Purine nucleoside phosphorylase DeoD-type (Escherichia coli O8 (strain IAI1)).